The sequence spans 455 residues: Probable glycine dehydrogenase (decarboxylating) subunit 1 (455 aa).

This sequence belongs to the GcvP family. N-terminal subunit subfamily. As to quaternary structure, the glycine cleavage system is composed of four proteins: P, T, L and H. In this organism, the P 'protein' is a heterodimer of two subunits.

It catalyses the reaction N(6)-[(R)-lipoyl]-L-lysyl-[glycine-cleavage complex H protein] + glycine + H(+) = N(6)-[(R)-S(8)-aminomethyldihydrolipoyl]-L-lysyl-[glycine-cleavage complex H protein] + CO2. The glycine cleavage system catalyzes the degradation of glycine. The P protein binds the alpha-amino group of glycine through its pyridoxal phosphate cofactor; CO(2) is released and the remaining methylamine moiety is then transferred to the lipoamide cofactor of the H protein. The protein is Probable glycine dehydrogenase (decarboxylating) subunit 1 of Saccharolobus islandicus (strain M.16.27) (Sulfolobus islandicus).